The sequence spans 640 residues: RAP domain-containing protein, chloroplastic (640 aa).

The N-terminal 32 residues, 1–32 (MEAALLRPPPLAARGGVSIAIAFSVSRLPSAA), are a transit peptide targeting the chloroplast. The interval 111–158 (SLQRMVASPKKKNKKKKSKKTNLKQKKAAEPKPPRDTDDDEDDEEEAD) is disordered. Over residues 119–136 (PKKKNKKKKSKKTNLKQK) the composition is skewed to basic residues. The span at 137–146 (KAAEPKPPRD) shows a compositional bias: basic and acidic residues. Acidic residues predominate over residues 147-158 (TDDDEDDEEEAD). The RAP domain occupies 575–633 (LAFEIDGPSHFSRNLGTPLGHTAFKRRYIAAAGWNLVSLSHQEWENLEGEFEQLEYLRR).

As to expression, expressed in roots, leaf sheaths, veins of leaf blade, mature leaves, endodermis of culm, panicles and anthers.

The protein localises to the plastid. The protein resides in the chloroplast. Probable RNA-binding protein that plays an essential role in chloroplast development. Regulates the ribosomal proteins homeostasis and ribosomal RNA development in chloroplasts. Involved the regulation of 16S rRNA and required for the expression of chloroplast-associated photosynthetic genes. The sequence is that of RAP domain-containing protein, chloroplastic from Oryza sativa subsp. japonica (Rice).